The primary structure comprises 38 residues: Potassium channel toxin alpha-KTx 3.3 (38 aa).

Disulfide bonds link cysteine 8–cysteine 28, cysteine 14–cysteine 33, and cysteine 18–cysteine 35. An interaction with Ca(2+)-activated K(+) channels region spans residues glycine 26–cysteine 33.

It belongs to the short scorpion toxin superfamily. Potassium channel inhibitor family. Alpha-KTx 03 subfamily. As to expression, expressed by the venom gland.

It is found in the secreted. Potent inhibitor of shaker potassium channels as well as the mammalian homologs of shaker. The sequence is that of Potassium channel toxin alpha-KTx 3.3 from Leiurus hebraeus (Hebrew deathstalker scorpion).